Consider the following 1786-residue polypeptide: MMVFQSFILGNLVSLCMKIINSVVVVGLYYGFLTTFSIGPSYLFLLRARVMDEGEEGTEKKVSATTGFIAGQLMMFISIYYAPLHLALGRPHTITVLALPYLLFHFFWNNHKHFFDYGSTTRNEMRNLRIQCVFLNNLIFQLFNHFILPSSMLARLVNIYMFRCNNKMLFVTSSFVGWLIGHILFMKWVGLVLVWIQQNNSIRSNVVIRSNKYKFLVSELRNSMARIFSILLFITCVYYLGRIPSPIFTKKLKGTSETGGTKQDQEVSTEEAPFPSLFSEEGEDLDKIDEMEEIRVNGKDKINKDDEFHVRTYYNYKTVSENLYGNKENSNLEFFKIKKKEDHFLWFEKPFVTLVFDYKRWNRPNRYIKNDKIENIVRNEMSQYFFYTCQSDGKERISFTYPPNLSTFFEMIQKRIPSFTKEKKTFDQVSTYWSLIHEEKRENLKKEFLNRIEALDKEWSVENILEKTTRFCYNEAKKEYLPKIYDPFLHGISRGRIKKLPPFQIITETYRKNNLGGSWINKIHGLLLKINYKKFEQTIEKFNRKSLSIEKKLSFFSEPQQEEKINSEEEIKTFKFLFDIVRTDSNDQTLIKNFMDFPEINKKVPRWSYKLISELEELEGENEENVPMEPGIRSRKAKRVVVFTDKEPHGEIYTNLKDNQNSDQNDEMALIRYSQQSDFRREIIKGSMRSQRRKTVIWEFFQAKVHSPLFFDRIDKLFFFSFDIWGLKKKIIKNFIWKKKIDKKEEEQSKREETRRIEIAETWDSFLFAQIIRGSLLVTQSILRKYIILPLLIIIKNSVRMLLFQFPEWSQDLKDWKREMHVKCTYNGVQLSETEFPRNWLTDGIQIKILFPFYLKPWHKSKFQASQKARLKKTKDKGEKNDFCFLTVWGMETELPFGSAQRKPSFFEPISKELKKRIKKLKKKSFVVLKIFKERAPIFLKVAKETKNWILKNFIFIKGISKRNLIPLFGPREIYELNEPKKDSIISNQMIHELSVQNKSLEWTNSSLSEKKIKNLIDRKKTIRNQIEEISKEKQNLTNSCTKLRYDSKIIESSKKIWQTFKRKNTRLIRKSIFFFKFCIEQMSIAIFLGIINIPRITTQLFFESTKKILDKYIYKNEENGEKKKNTLYFISTIKNLISNKKKMSYDLCSLSQAYVFYKLSQIKVSNFCKLKAVLEYNICITSFFVKNKIKVFFQEHGIFHYELKNKTFLNSEVNQWKNWLRSQYQYNLPQISWARLVTQNWKNKINKDSLVLNPSLTKEDSYEKKKFDNYKKQKFFEADSLLNPKHNVKKDSIYNLFCYKSIHSTEKNFDMSIGIALDNCLVSSFLEKYNIRGMGEIRHRKYLDWRILNFWFTKKVTIEPWVDTKSKKKYINTKVQNYQKIDKITQTDLANKKRNFFDWMGMNEEILNQRITNFEFFFFPEFFLFSSTYKMKPWVIPIKLLLLNFNENINVNKKIIRKKKGFIPSNEKESLRFYNLNKEEKESAGQVELESDKETKRNPEAARLNQEKNIEENFAESTIKKRKNKKQYKSNTEAELDLFLTRYSRFQLRWNCFFNQKILNNVKVYCLLVRLNNPNEIAVSSIERGEMSLDILMIEKNFTFAKLMKKGILIIEPVRLSVQNDGQLIIYRTIGISLVHKNKHKISKRYKKKSYINKKFFEKSITKYQNKTVNKKKNNYDFFVPEKILSPKRRREFRILICFNLKKKNARDTNSRFDKNIQNLTTVLHKKKDLDLDKDKNNLINLKSFLWPNFKLEDLACMNRYWFNTTNGNHFSMIRIRMYTRFPIP.

6 helical membrane-spanning segments follow: residues 19-39, 68-88, 91-111, 133-153, 176-196, and 227-247; these read IINS…FSIG, FIAG…HLAL, PHTI…WNNH, VFLN…SSML, VGWL…LVWI, and IFSI…PSPI. A coiled-coil region spans residues 1007–1046; it reads SLSEKKIKNLIDRKKTIRNQIEEISKEKQNLTNSCTKLRY.

Belongs to the TIC214 family. As to quaternary structure, part of the Tic complex. Component of the 1-MD complex, composed of TIC20-I, TIC214, TIC100 and TIC56. Interacts with the translocating preproteins. Hydrolysis of ATP is essential for the formation of this complex. The 1-MD complex interacts with TIC21.

Its subcellular location is the plastid. It is found in the chloroplast inner membrane. In terms of biological role, involved in protein precursor import into chloroplasts. May be part of an intermediate translocation complex acting as a protein-conducting channel at the inner envelope. The protein is Protein TIC 214 of Arabidopsis thaliana (Mouse-ear cress).